The primary structure comprises 469 residues: Peripherin (469 aa).

Composition is skewed to low complexity over residues 1-18 and 27-53; these read MSHP…SYRR and SPGA…PGSS. The interval 1–60 is disordered; it reads MSHPSGLRSSVSSTSYRRTFGPPPSLSPGAFSYSSSSRFSSSRLLGSASPGSSVRLGSFR. The tract at residues 1 to 98 is head; it reads MSHPSGLRSS…FLATRSNEKQ (98 aa). Position 16 is a 3'-nitrotyrosine (Tyr16). Residues Ser27, Ser49, and Ser58 each carry the phosphoserine modification. In terms of domain architecture, IF rod spans 96–406; the sequence is EKQELQELND…KLLEGEESRI (311 aa). Residues 99 to 131 form a coil 1A region; sequence ELQELNDRFANFIEKVRFLEQQNAALRGELNQA. The segment at 132 to 142 is linker 1; that stretch reads RGQEPARADQL. The tract at residues 143-238 is coil 1B; it reads CQQELRELRR…KLHEEELRDL (96 aa). The interval 239 to 261 is linker 2; that stretch reads QLSVESQQVQHVEVEATVKPELT. The interval 262–404 is coil 2; it reads AALRDIRAQY…YRKLLEGEES (143 aa). Tyr378 bears the 3'-nitrotyrosine mark. A tail region spans residues 405 to 469; the sequence is RISVPVHSFA…SELDKSPQSY (65 aa). Residues 447 to 469 form a disordered region; the sequence is GEQVVTESQKEQHSELDKSPQSY. Tyr469 carries the post-translational modification Phosphotyrosine.

Belongs to the intermediate filament family. Forms homodimers (in vitro). Homopolymerizes into a filamentous network (in vitro). Forms heterodimers with NEFL, NEFM or NEFH (in vitro). Interacts with DST (via C-terminus). Interacts with RAB7A; the interaction is direct. Interacts with PRKCE (via phorbol-ester/DAG-type 2 domain). Phosphorylated; phosphorylation increases after nerve injury in regenerating neurons.

It is found in the cytoplasm. The protein localises to the cytoskeleton. Its subcellular location is the cell projection. The protein resides in the axon. It localises to the perikaryon. In terms of biological role, class-III neuronal intermediate filament protein. May form an independent structural network without the involvement of other neurofilaments or may cooperate with the neuronal intermediate filament proteins NEFL, NEFH, NEFM and INA to form a filamentous network. Assembly of the neuronal intermediate filaments may be regulated by RAB7A. Plays a role in the development of unmyelinated sensory neurons. May be involved in axon elongation and axon regeneration after injury. Inhibits neurite extension in type II spiral ganglion neurons in the cochlea. In Bos taurus (Bovine), this protein is Peripherin (PRPH).